A 158-amino-acid chain; its full sequence is Phosphopantetheine adenylyltransferase (158 aa).

Position 9 (Ser-9) interacts with substrate. Residues Ser-9–Phe-10 and His-17 each bind ATP. Positions 41, 73, and 87 each coordinate substrate. ATP contacts are provided by residues Gly-88–Arg-90, Glu-98, and Asn-122–Ser-128.

This sequence belongs to the bacterial CoaD family. In terms of assembly, homohexamer. The cofactor is Mg(2+).

The protein localises to the cytoplasm. The catalysed reaction is (R)-4'-phosphopantetheine + ATP + H(+) = 3'-dephospho-CoA + diphosphate. It participates in cofactor biosynthesis; coenzyme A biosynthesis; CoA from (R)-pantothenate: step 4/5. Reversibly transfers an adenylyl group from ATP to 4'-phosphopantetheine, yielding dephospho-CoA (dPCoA) and pyrophosphate. The chain is Phosphopantetheine adenylyltransferase from Leuconostoc citreum (strain KM20).